The sequence spans 568 residues: Putative F-box protein At5g39480 (568 aa).

One can recognise an F-box domain in the interval 9–55 (ACLLLTLPEDVFAVISRFLSPSDICNLILCGKSLPALVDTEKMWLVQ). The disordered stretch occupies residues 315-337 (TNVLGESSSSKNTTPSQSEIRVS). Residues 321-332 (SSSSKNTTPSQS) are compositionally biased toward low complexity.

In Arabidopsis thaliana (Mouse-ear cress), this protein is Putative F-box protein At5g39480.